The chain runs to 505 residues: uncharacterized protein (505 aa).

Over residues 1-16 the composition is skewed to polar residues; the sequence is MPPTASLTRSPPTASQ. The interval 1–474 is disordered; it reads MPPTASLTRS…TPPTASLTRT (474 aa). Composition is skewed to low complexity over residues 17–33 and 40–59; these read TRTLPRASRTRTPPRAS and TASLRRTPSRASRTRTPPRA. A compositionally biased stretch (polar residues) spans 66-78; that stretch reads SRASLTRTLSRAS. Low complexity-rich tracts occupy residues 96–122, 129–140, and 147–158; these read SLTRTPPTASRTRSLPRASRTRTPPRT, PRTSQTRTPPRA, and SRASRTRTPPRA. Polar residues-rich tracts occupy residues 165 to 177 and 188 to 200; these read SRASLTRTPSRAS and TRTPSRASLTRTP. Low complexity predominate over residues 201–226; it reads PTASLTRASRTRTPPRTSQTRTPPRA. 7 stretches are compositionally biased toward polar residues: residues 233–254, 265–293, 309–329, 345–365, 373–383, 399–408, and 435–448; these read SRASLTRTPSRASLTRTPSRAS, TRTPSRASLTRTPPTASLTRTPPTASLTR, LTRTPPTASLTRSPPTASLTR, LTRTPSTASLTRTPSRASLTR, TRTPSRASLTR, LTRSPPTASL, and LTRSPSTASLTRTP. Low complexity predominate over residues 453 to 474; sequence LRRTPPRTSLTRTPPTASLTRT.

This is an uncharacterized protein from Homo sapiens (Human).